Here is a 419-residue protein sequence, read N- to C-terminus: Peptide chain release factor subunit 1 (419 aa).

It belongs to the eukaryotic release factor 1 family. Heterodimer of two subunits, one of which binds GTP.

The protein localises to the cytoplasm. Its function is as follows. Directs the termination of nascent peptide synthesis (translation) in response to the termination codons UAA, UAG and UGA. The sequence is that of Peptide chain release factor subunit 1 from Methanococcus maripaludis (strain DSM 14266 / JCM 13030 / NBRC 101832 / S2 / LL).